Reading from the N-terminus, the 102-residue chain is Outer membrane protein assembly factor BamE (102 aa).

An N-terminal signal peptide occupies residues 1 to 20 (MNNYIKALLIIICFSSCSIS).

Belongs to the BamE family. As to quaternary structure, part of the Bam complex.

Its subcellular location is the cell outer membrane. In terms of biological role, part of the outer membrane protein assembly complex, which is involved in assembly and insertion of beta-barrel proteins into the outer membrane. This is Outer membrane protein assembly factor BamE from Buchnera aphidicola subsp. Acyrthosiphon pisum (strain APS) (Acyrthosiphon pisum symbiotic bacterium).